The chain runs to 786 residues: MTEVKSKETRAPSSARDGAVLLQAPPSRGEAEGIDVALDGLLYPRSSDEEEEEEENEEEEEEEEPQQREEEEEEEEEDRDCPSYRPGGGSLSKDCLDSVLDTFLAPAAHAAPWSLFGPEVPEVPVAPMSRGPEQKAVDAGPGAPGPSQPRPGAPLWPGADSLNVAVKARPGPEDASENRAPGLPGAEERGFPERDAGPGEGGLAPAAAASPAAVEPGAGQDYLHVPILPLNSAFLASRTRQLLDVEAAYDGSAFGPRSSPSVPAADLAEYGYPPPDGKEGPFAYGEFQSALKIKEEGVGLPAAPPPFLGAKAAPADFAQPPRAGQEPSLECVLYKAEPPLLPGAYGPPAAPDSLPSTSAAPPGLYSPLGLNGHHQALGFPAAVLKEGLPQLCPPYLGYVRPDTETSQSSQYSFESLPQKICLICGDEASGCHYGVLTCGSCKVFFKRAMEGQHNYLCAGRNDCIVDKIRRKNCPACRLRKCCQAGMVLGGRKFKKLNKMKVVRTLDVALQQPAVLQDETQSLTQRLSFSPNQEIPFVPPMISVLRGIEPEVVYAGYDNTKPETPSSLLTSLNHLCERQLLCVVKWSKLLPGFRNLHIDDQITLIQYSWMSLMVFAMGWRSYKHVSGQMLYFAPDLILNEQRMKESSFYSLCLSMWQLPQEFVRLQVSQEEFLCMKALLLLNTIPLEGLRSQSQFDEMRTSYIRELVKAIGLRQKGVVANSQRFYQLTKLMDSMHDLVKQLHLFCLNTFLQSRALSVEFPEMMSEVIAAQLPKILAGMVKPLLFHKK.

Residues 1–10 (MTEVKSKETR) are compositionally biased toward basic and acidic residues. Disordered stretches follow at residues 1–95 (MTEV…SKDC), 110–212 (AAPW…ASPA), and 252–279 (SAFG…DGKE). The segment at 1–420 (MTEVKSKETR…YSFESLPQKI (420 aa)) is modulating, Pro-Rich. A Glycyl lysine isopeptide (Lys-Gly) (interchain with G-Cter in SUMO) cross-link involves residue K7. Over residues 48–79 (DEEEEEEENEEEEEEEEPQQREEEEEEEEEDR) the composition is skewed to acidic residues. Residues 143–154 (APGPSQPRPGAP) are compositionally biased toward pro residues. Positions 186-197 (AEERGFPERDAG) are enriched in basic and acidic residues. Low complexity predominate over residues 203–212 (LAPAAAASPA). Phosphoserine is present on residues S210 and S259. K294 participates in a covalent cross-link: Glycyl lysine isopeptide (Lys-Gly) (interchain with G-Cter in SUMO); alternate. A Glycyl lysine isopeptide (Lys-Gly) (interchain with G-Cter in ubiquitin); alternate cross-link involves residue K294. K385 is covalently cross-linked (Glycyl lysine isopeptide (Lys-Gly) (interchain with G-Cter in SUMO)). 2 NR C4-type zinc fingers span residues 421–441 (CLIC…CGSC) and 457–481 (CAGR…LRKC). Residues 421 to 486 (CLICGDEASG…RLRKCCQAGM (66 aa)) constitute a DNA-binding region (nuclear receptor). S529 carries the post-translational modification Phosphoserine. The 235-residue stretch at 532–766 (QEIPFVPPMI…EFPEMMSEVI (235 aa)) folds into the NR LBD domain.

This sequence belongs to the nuclear hormone receptor family. NR3 subfamily. Post-translationally, phosphorylation of Ser-529 is sharply increased upon progesterone treatment, whereas phosphorylation of Ser-210 and Ser-259 is modestly induced by progesterone. Ubiquitinated. Ubiquitination is increased by progesterone and represses sumoylation at the same site. In terms of processing, sumoylation is hormone-dependent and represses transcriptional activity. Sumoylation on all three sites is enhanced by PIAS3. Desumoylated by SENP1. Sumoylation on Lys-385, the main site of sumoylation, is repressed by ubiquitination on the same site. As to expression, oviduct and bursa of Fabricius.

The protein localises to the nucleus. It localises to the cytoplasm. Functionally, the steroid hormones and their receptors are involved in the regulation of eukaryotic gene expression and affect cellular proliferation and differentiation in target tissues. In Gallus gallus (Chicken), this protein is Progesterone receptor (PGR).